We begin with the raw amino-acid sequence, 195 residues long: Kiwa protein KwaA (195 aa).

The next 3 helical transmembrane spans lie at 10–30 (GLYILSLAMLFVFIIILTAKI), 46–66 (LVLTNIVPIVCFVFFLFSIYF), and 117–137 (IAYLLLVVVIGIIFIKTDKYY).

It is found in the cell inner membrane. Component of antiviral defense system Kiwa, composed of KwaA and KwaB. Expression of Kiwa in E.coli (strain MG1655) confers resistance to phages lambda and SECphi18. The sequence is that of Kiwa protein KwaA from Escherichia coli O55:H7 (strain RM12579 / EPEC).